Reading from the N-terminus, the 951-residue chain is Valine--tRNA ligase (951 aa).

Residues 42 to 52 (PNVTGSLHMGH) carry the 'HIGH' region motif. The short motif at 554 to 558 (KMSKS) is the 'KMSKS' region element. Lys557 contributes to the ATP binding site. Residues 880-944 (AGLINKEDEL…AEAKAKLIEQ (65 aa)) are a coiled coil.

This sequence belongs to the class-I aminoacyl-tRNA synthetase family. ValS type 1 subfamily. As to quaternary structure, monomer.

It localises to the cytoplasm. It catalyses the reaction tRNA(Val) + L-valine + ATP = L-valyl-tRNA(Val) + AMP + diphosphate. In terms of biological role, catalyzes the attachment of valine to tRNA(Val). As ValRS can inadvertently accommodate and process structurally similar amino acids such as threonine, to avoid such errors, it has a 'posttransfer' editing activity that hydrolyzes mischarged Thr-tRNA(Val) in a tRNA-dependent manner. This Salmonella paratyphi A (strain ATCC 9150 / SARB42) protein is Valine--tRNA ligase.